The primary structure comprises 854 residues: Translation initiation factor IF-2 (854 aa).

Residues 61-72 (KNIKTPTAKKPK) show a composition bias toward basic residues. Disordered stretches follow at residues 61 to 115 (KNIK…LASA) and 167 to 186 (ESLK…KKES). Residues 73–108 (KENAKDQEKLNESEKKEPKKEESKEQEKQEIIDTHK) show a composition bias toward basic and acidic residues. One can recognise a tr-type G domain in the interval 353–520 (TRAPVITIMG…IVLLQADILE (168 aa)). Positions 362–369 (GHVDHGKT) are G1. A GTP-binding site is contributed by 362–369 (GHVDHGKT). Positions 387–391 (GITQH) are G2. The segment at 408–411 (DTPG) is G3. GTP-binding positions include 408–412 (DTPGH) and 462–465 (NKMD). A G4 region spans residues 462–465 (NKMD). The interval 498–500 (SAK) is G5.

This sequence belongs to the TRAFAC class translation factor GTPase superfamily. Classic translation factor GTPase family. IF-2 subfamily.

It localises to the cytoplasm. In terms of biological role, one of the essential components for the initiation of protein synthesis. Protects formylmethionyl-tRNA from spontaneous hydrolysis and promotes its binding to the 30S ribosomal subunits. Also involved in the hydrolysis of GTP during the formation of the 70S ribosomal complex. This chain is Translation initiation factor IF-2, found in Campylobacter jejuni subsp. doylei (strain ATCC BAA-1458 / RM4099 / 269.97).